The following is a 234-amino-acid chain: UPF0502 protein Bphyt_5265 (234 aa).

This sequence belongs to the UPF0502 family.

This chain is UPF0502 protein Bphyt_5265, found in Paraburkholderia phytofirmans (strain DSM 17436 / LMG 22146 / PsJN) (Burkholderia phytofirmans).